Here is a 288-residue protein sequence, read N- to C-terminus: ATP synthase gamma chain (288 aa).

The protein belongs to the ATPase gamma chain family. In terms of assembly, F-type ATPases have 2 components, CF(1) - the catalytic core - and CF(0) - the membrane proton channel. CF(1) has five subunits: alpha(3), beta(3), gamma(1), delta(1), epsilon(1). CF(0) has three main subunits: a, b and c.

The protein resides in the cell inner membrane. In terms of biological role, produces ATP from ADP in the presence of a proton gradient across the membrane. The gamma chain is believed to be important in regulating ATPase activity and the flow of protons through the CF(0) complex. In Laribacter hongkongensis (strain HLHK9), this protein is ATP synthase gamma chain.